The sequence spans 358 residues: Peptide chain release factor 1 (358 aa).

Position 234 is an N5-methylglutamine (Q234).

Belongs to the prokaryotic/mitochondrial release factor family. Methylated by PrmC. Methylation increases the termination efficiency of RF1.

It localises to the cytoplasm. In terms of biological role, peptide chain release factor 1 directs the termination of translation in response to the peptide chain termination codons UAG and UAA. The protein is Peptide chain release factor 1 of Leifsonia xyli subsp. xyli (strain CTCB07).